A 22-amino-acid polypeptide reads, in one-letter code: Lantibiotic mutacin B-Ny266 (22 aa).

Residues 3–7 (SWSFC) constitute a cross-link (lanthionine (Ser-Cys)). Residue serine 5 is modified to 2,3-didehydroalanine (Ser). Positions 8–11 (TPGC) form a cross-link, beta-methyllanthionine (Thr-Cys). The residue at position 14 (threonine 14) is a 2,3-didehydrobutyrine. The segment at residues 16–21 (SFNSYC) is a cross-link (lanthionine (Ser-Cys)). Residues 19-22 (SYCC) constitute a cross-link (S-(2-aminovinyl)-D-cysteine (Ser-Cys)).

In terms of processing, maturation of lantibiotics involves the enzymatic conversion of Thr, and Ser into dehydrated AA and the formation of thioether bonds with cysteine. The C-terminal lanthionine undergoes decarboxylation. This is followed by membrane translocation and cleavage of the modified precursor. It is not established whether the 2,3-didehydrobutyrine is the E- or Z-isomer.

In terms of biological role, lanthionine-containing peptide antibiotic (lantibiotic) active on Gram-positive bacteria. The bactericidal activity of lantibiotics is based on depolarization of energized bacterial cytoplasmic membranes, initiated by the formation of aqueous transmembrane pores. In Streptococcus mutans, this protein is Lantibiotic mutacin B-Ny266.